Reading from the N-terminus, the 562-residue chain is Bacillolysin (562 aa).

The first 24 residues, 1–24 (MKKKKQALKVLLSVGILSSSFAFA), serve as a signal peptide directing secretion. The propeptide at 25–245 (HTSSAAPNNV…KQAAKPAAKP (221 aa)) is activation peptide. 3 residues coordinate Ca(2+): Asp303, Asp305, and Asp384. His388 is a binding site for Zn(2+). The active site involves Glu389. Zn(2+) contacts are provided by His392 and Glu412. 8 residues coordinate Ca(2+): Glu423, Asn429, Asp431, Glu433, Glu436, Tyr439, Thr440, and Asp446. Catalysis depends on His477, which acts as the Proton donor.

Belongs to the peptidase M4 family. Requires Ca(2+) as cofactor. The cofactor is Zn(2+).

The protein localises to the secreted. The catalysed reaction is Similar, but not identical, to that of thermolysin.. In terms of biological role, extracellular zinc metalloprotease. This is Bacillolysin from Priestia megaterium (strain ATCC 14581 / DSM 32 / CCUG 1817 / JCM 2506 / NBRC 15308 / NCIMB 9376 / NCTC 10342 / NRRL B-14308 / VKM B-512 / Ford 19) (Bacillus megaterium).